Here is a 132-residue protein sequence, read N- to C-terminus: uncharacterized protein (132 aa).

Disordered regions lie at residues 36-69 and 97-132; these read GLAS…PNIS and QIND…PTAR. S101 carries the phosphoserine modification.

In terms of assembly, copurifies with proteins HOL1, MMP1, PEX7 and PLB1.

This is an uncharacterized protein from Saccharomyces cerevisiae (strain ATCC 204508 / S288c) (Baker's yeast).